Reading from the N-terminus, the 436-residue chain is Aminopeptidase C (436 aa).

Catalysis depends on residues cysteine 68, histidine 356, and asparagine 378.

It belongs to the peptidase C1 family. In terms of assembly, homohexamer.

It carries out the reaction Inactivates bleomycin B2 (a cytotoxic glycometallopeptide) by hydrolysis of a carboxyamide bond of beta-aminoalanine, but also shows general aminopeptidase activity. The specificity varies somewhat with source, but amino acid arylamides of Met, Leu and Ala are preferred.. In terms of biological role, hydrolyzes naphthylamide-substituted amino acids as well as di- and tripeptides in which the half-cystine residue is involved in a disulfide loop, notably in oxytocin and vasopressin. Also has a bleomycin hydrolase activity. The chain is Aminopeptidase C (pepC) from Lactococcus lactis subsp. cremoris (Streptococcus cremoris).